The chain runs to 150 residues: Urease accessory protein UreE (150 aa).

The protein belongs to the UreE family.

It is found in the cytoplasm. In terms of biological role, involved in urease metallocenter assembly. Binds nickel. Probably functions as a nickel donor during metallocenter assembly. The chain is Urease accessory protein UreE from Staphylococcus saprophyticus subsp. saprophyticus (strain ATCC 15305 / DSM 20229 / NCIMB 8711 / NCTC 7292 / S-41).